Consider the following 486-residue polypeptide: E3 ubiquitin-protein ligase TRIM58 (486 aa).

The RING-type zinc finger occupies 16 to 61 (CPVCLDFLQEPVSVDCGHSFCLRCISEFCEKSDGAQGGVYACPQCR). The B box-type zinc-finger motif lies at 91-132 (PGARRCARHGEDLSRFCEEDEAALCWVCDAGPEHRTHRTAPL). Residues C96, H99, C118, and H124 each coordinate Zn(2+). The stretch at 193 to 242 (LAQEEQRQLRRLEAEERATLQRLRESKSRLVQQSKALKELADELQERCQR) forms a coiled coil. The B30.2/SPRY domain occupies 273–463 (LKTACCIPGR…TPLILPPTTI (191 aa)).

It belongs to the TRIM/RBCC family. As to expression, expressed in erythroblasts.

The catalysed reaction is S-ubiquitinyl-[E2 ubiquitin-conjugating enzyme]-L-cysteine + [acceptor protein]-L-lysine = [E2 ubiquitin-conjugating enzyme]-L-cysteine + N(6)-ubiquitinyl-[acceptor protein]-L-lysine.. The protein operates within protein modification; protein ubiquitination. In terms of biological role, E3 ubiquitin ligase induced during late erythropoiesis. Directly binds and ubiquitinates the intermediate chain of the microtubule motor dynein (DYNC1LI1/DYNC1LI2), stimulating the degradation of the dynein holoprotein complex. May participate in the erythroblast enucleation process through regulation of nuclear polarization. The sequence is that of E3 ubiquitin-protein ligase TRIM58 (TRIM58) from Homo sapiens (Human).